The primary structure comprises 314 residues: Solute carrier family 25 member 33 (314 aa).

3 Solcar repeats span residues 4-111 (KDTL…SKET), 119-206 (NSGV…LKKY), and 224-308 (SDFL…IVHL). A run of 6 helical transmembrane segments spans residues 7 to 27 (LLHL…TCPL), 44 to 58 (VFQV…AGVI), 114 to 134 (GIFV…AAFI), 183 to 203 (LTAS…YETL), 226 to 246 (FLGL…IAYP), and 291 to 311 (QIPN…LLAE).

Belongs to the mitochondrial carrier (TC 2.A.29) family.

Its subcellular location is the mitochondrion inner membrane. In terms of biological role, mitochondrial transporter that imports/exports pyrimidine nucleotides into and from mitochondria which participates in dendritic cell endocytosis. This chain is Solute carrier family 25 member 33 (slc25a33), found in Danio rerio (Zebrafish).